The chain runs to 218 residues: Adenylate kinase (218 aa).

Position 12–17 (12–17) interacts with ATP; that stretch reads GAGKGT. Positions 32–61 are NMP; that stretch reads STGDMLREARSSGTEMGKRVAEVMDRGELV. AMP contacts are provided by residues Thr-33, Arg-38, 59 to 61, 85 to 88, and Gln-92; these read ELV and GFPR. The segment at 126 to 164 is LID; that stretch reads GRFTCGNCGEVYHDVTKPTKEPGKCDVCGSTDLRRRADD. Position 127 (Arg-127) interacts with ATP. Positions 130 and 133 each coordinate Zn(2+). 136 to 137 is a binding site for ATP; that stretch reads VY. The Zn(2+) site is built by Cys-150 and Cys-153. Residues Arg-161 and Arg-172 each coordinate AMP. Residue Ala-200 participates in ATP binding.

It belongs to the adenylate kinase family. As to quaternary structure, monomer.

The protein resides in the cytoplasm. It carries out the reaction AMP + ATP = 2 ADP. It functions in the pathway purine metabolism; AMP biosynthesis via salvage pathway; AMP from ADP: step 1/1. Functionally, catalyzes the reversible transfer of the terminal phosphate group between ATP and AMP. Plays an important role in cellular energy homeostasis and in adenine nucleotide metabolism. The sequence is that of Adenylate kinase from Paracoccus denitrificans (strain Pd 1222).